Reading from the N-terminus, the 490-residue chain is Bifunctional protein HldE (490 aa).

The tract at residues 1 to 330 (MLDFEQLSPA…RKILPHAFLA (330 aa)) is ribokinase. An ATP-binding site is contributed by 205-208 (NRKE). The active site involves Asp275. The cytidylyltransferase stretch occupies residues 358 to 490 (FTNGCFDILH…LVARAQNGKS (133 aa)).

This sequence in the N-terminal section; belongs to the carbohydrate kinase PfkB family. It in the C-terminal section; belongs to the cytidylyltransferase family. In terms of assembly, homodimer.

It catalyses the reaction D-glycero-beta-D-manno-heptose 7-phosphate + ATP = D-glycero-beta-D-manno-heptose 1,7-bisphosphate + ADP + H(+). It carries out the reaction D-glycero-beta-D-manno-heptose 1-phosphate + ATP + H(+) = ADP-D-glycero-beta-D-manno-heptose + diphosphate. The protein operates within nucleotide-sugar biosynthesis; ADP-L-glycero-beta-D-manno-heptose biosynthesis; ADP-L-glycero-beta-D-manno-heptose from D-glycero-beta-D-manno-heptose 7-phosphate: step 1/4. It participates in nucleotide-sugar biosynthesis; ADP-L-glycero-beta-D-manno-heptose biosynthesis; ADP-L-glycero-beta-D-manno-heptose from D-glycero-beta-D-manno-heptose 7-phosphate: step 3/4. Functionally, catalyzes the phosphorylation of D-glycero-D-manno-heptose 7-phosphate at the C-1 position to selectively form D-glycero-beta-D-manno-heptose-1,7-bisphosphate. In terms of biological role, catalyzes the ADP transfer from ATP to D-glycero-beta-D-manno-heptose 1-phosphate, yielding ADP-D-glycero-beta-D-manno-heptose. The sequence is that of Bifunctional protein HldE from Rhodopseudomonas palustris (strain BisA53).